The primary structure comprises 660 residues: RalBP1-associated Eps domain-containing protein 2 (660 aa).

The EH 1 domain maps to glutamate 34 to glutamate 147. A disordered region spans residues glutamate 169–leucine 208. Position 254 is a phosphoserine (serine 254). Positions glutamine 282–phenylalanine 373 constitute an EH 2 domain. The EF-hand domain occupies leucine 315–arginine 350. Aspartate 328, aspartate 330, aspartate 332, and glutamate 339 together coordinate Ca(2+). Residues asparagine 433–isoleucine 616 form a disordered region. The residue at position 479 (threonine 479) is a Phosphothreonine. Serine 493 carries the post-translational modification Phosphoserine. A compositionally biased stretch (pro residues) spans leucine 512 to cysteine 523. An interaction with RALBP1 region spans residues proline 514–leucine 660. The interval proline 561–leucine 660 is interaction with ASAP1. Positions proline 582 to threonine 594 are enriched in low complexity. A coiled-coil region spans residues valine 601–valine 657.

In terms of assembly, interacts with EPN1; the interaction is direct. Interacts with EPS15; the interaction is direct. Interacts with EPS15L1. Interacts with RALBP1; can form a ternary complex with activated Ral (RALA or RALB). Interacts with ASAP1; the interaction is direct and this complex can bind paxillin. Also forms a ternary complex with RALBP1 and ASAP1. Interacts with GRB2. In terms of processing, tyrosine-phosphorylated upon stimulation of cells with EGF. Phosphorylation on Tyr-residues induces its association with the EGF receptor probably indirectly through an adapter like GRB2. As to expression, expressed at high levels in the cerebrum, cerebellum, lung, kidney, and testis. Weakly expressed in the kidney. Isoform 2 is down-regulated during progression of prostate cancer.

It localises to the cytoplasm. Functionally, involved in ligand-dependent receptor mediated endocytosis of the EGF and insulin receptors as part of the Ral signaling pathway. By controlling growth factor receptors endocytosis may regulate cell survival. Through ASAP1 may regulate cell adhesion and migration. The sequence is that of RalBP1-associated Eps domain-containing protein 2 (REPS2) from Homo sapiens (Human).